The sequence spans 70 residues: Non-histone chromosomal protein H6 (70 aa).

The disordered stretch occupies residues 1–70; it reads MPKRKSATKG…AAGDGAGNAK (70 aa). Residues 30 to 45 show a composition bias toward basic residues; that stretch reads AKPKKAAAPKKAVKGK. Residues 46 to 57 are compositionally biased toward basic and acidic residues; it reads KAAENGDAKAEA.

This sequence belongs to the HMGN family.

Its subcellular location is the nucleus. The protein resides in the secreted. Its function is as follows. Non-histone protein that probably binds to the inner side of nucleosomal DNA, altering the association between the DNA and the nucleosome octamer. In terms of biological role, oncorhyncin III has antibacterial activity against Gram-positive and Gram-negative bacteria at submicromolar concentrations. The sequence is that of Non-histone chromosomal protein H6 from Oncorhynchus mykiss (Rainbow trout).